The following is a 675-amino-acid chain: Vacuolar protein sorting-associated protein 5 (675 aa).

Disordered regions lie at residues 1–26 (MDYE…QSLV), 65–84 (EWKD…EHDN), and 165–219 (RAQR…RREN). A compositionally biased stretch (basic residues) spans 168-180 (RNSKRNHSLKAKR). A compositionally biased stretch (basic and acidic residues) spans 195 to 204 (PLKKAEKENE). Residues 279–394 (VAFKVEVKDP…LFLTSDDFSS (116 aa)) enclose the PX domain. Arg320, Lys346, and Arg360 together coordinate a 1,2-diacyl-sn-glycero-3-phospho-(1D-myo-inositol-3-phosphate).

The protein belongs to the sorting nexin family. In terms of assembly, component of the retromer complex which consists of VPS29, VPS26, VPS35, VPS5 and VPS17. Component of a retromer subcomplex consisting of VPSD5 and VPS17. In terms of processing, phosphorylated on serine residue(s).

It localises to the cytoplasm. Its subcellular location is the golgi apparatus membrane. The protein localises to the endosome membrane. Its function is as follows. Plays a role in vesicular protein sorting. Required for retention of late Golgi membrane proteins and vacuolar biogenesis. Component of the membrane-associated retromer complex which is essential in endosome-to-Golgi retrograde transport. The VPS5-VPS17 subcomplex may assemble onto the membrane to promote vesicle formation. This chain is Vacuolar protein sorting-associated protein 5 (VPS5), found in Saccharomyces cerevisiae (strain ATCC 204508 / S288c) (Baker's yeast).